Consider the following 199-residue polypeptide: Adenylyl-sulfate kinase (199 aa).

G31–S38 contributes to the ATP binding site. S105 serves as the catalytic Phosphoserine intermediate.

This sequence belongs to the APS kinase family.

It carries out the reaction adenosine 5'-phosphosulfate + ATP = 3'-phosphoadenylyl sulfate + ADP + H(+). It functions in the pathway sulfur metabolism; hydrogen sulfide biosynthesis; sulfite from sulfate: step 2/3. Catalyzes the synthesis of activated sulfate. The protein is Adenylyl-sulfate kinase of Marinobacter nauticus (strain ATCC 700491 / DSM 11845 / VT8) (Marinobacter aquaeolei).